Consider the following 494-residue polypeptide: 3-octaprenyl-4-hydroxybenzoate carboxy-lyase (494 aa).

A Mn(2+)-binding site is contributed by N172. Prenylated FMN is bound by residues 175 to 177 (IYR), 189 to 191 (RWL), and 194 to 195 (RG). E238 provides a ligand contact to Mn(2+). The active-site Proton donor is the D294.

Belongs to the UbiD family. In terms of assembly, homohexamer. It depends on prenylated FMN as a cofactor. Requires Mn(2+) as cofactor.

Its subcellular location is the cell membrane. It carries out the reaction a 4-hydroxy-3-(all-trans-polyprenyl)benzoate + H(+) = a 2-(all-trans-polyprenyl)phenol + CO2. The protein operates within cofactor biosynthesis; ubiquinone biosynthesis. In terms of biological role, catalyzes the decarboxylation of 3-octaprenyl-4-hydroxy benzoate to 2-octaprenylphenol, an intermediate step in ubiquinone biosynthesis. This is 3-octaprenyl-4-hydroxybenzoate carboxy-lyase from Herminiimonas arsenicoxydans.